Consider the following 302-residue polypeptide: Phosphatidylglycerol--prolipoprotein diacylglyceryl transferase (302 aa).

The next 3 helical transmembrane spans lie at W26–V46, L67–Y87, and I108–L128. An a 1,2-diacyl-sn-glycero-3-phospho-(1'-sn-glycerol)-binding site is contributed by R156. The next 2 membrane-spanning stretches (helical) occupy residues G231–V251 and L263–L283.

The protein belongs to the Lgt family.

The protein localises to the cell inner membrane. The catalysed reaction is L-cysteinyl-[prolipoprotein] + a 1,2-diacyl-sn-glycero-3-phospho-(1'-sn-glycerol) = an S-1,2-diacyl-sn-glyceryl-L-cysteinyl-[prolipoprotein] + sn-glycerol 1-phosphate + H(+). It functions in the pathway protein modification; lipoprotein biosynthesis (diacylglyceryl transfer). Catalyzes the transfer of the diacylglyceryl group from phosphatidylglycerol to the sulfhydryl group of the N-terminal cysteine of a prolipoprotein, the first step in the formation of mature lipoproteins. In Caulobacter sp. (strain K31), this protein is Phosphatidylglycerol--prolipoprotein diacylglyceryl transferase.